We begin with the raw amino-acid sequence, 2912 residues long: Fibrillin-2 (2912 aa).

Positions Met1–Gly28 are cleaved as a signal peptide. Residues Ala27–Ala52 form a disordered region. Residues Gln29 to Arg77 constitute a propeptide that is removed on maturation. Residues Pro30 to Gln45 show a composition bias toward pro residues. 3 EGF-like domains span residues Ile111–Gly142, Ser145–Gly176, and Gly176–Glu208. 9 cysteine pairs are disulfide-bonded: Cys115–Cys124, Cys119–Cys130, Cys132–Cys141, Cys149–Cys159, Cys153–Cys164, Cys166–Cys175, Cys180–Cys190, Cys184–Cys196, and Cys198–Cys207. The tract at residues Cys149–Ile359 is interaction with MFAP4. In terms of domain architecture, TB 1 spans Gly214–Ile266. The region spanning Asp276 to Glu317 is the EGF-like 4; calcium-binding domain. 6 cysteine pairs are disulfide-bonded: Cys280–Cys292, Cys287–Cys301, Cys303–Cys316, Cys322–Cys334, Cys329–Cys343, and Cys345–Cys358. Ser298 carries an O-linked (Glc) serine glycan. Residues Asp318–Ile359 form the EGF-like 5; calcium-binding domain. A glycan (O-linked (Glc) serine) is linked at Ser340. In terms of domain architecture, TB 2 spans Gly364–Cys417. N-linked (GlcNAc...) asparagine glycosylation is present at Asn492. The 41-residue stretch at Thr494–Ile534 folds into the EGF-like 6 domain. 15 cysteine pairs are disulfide-bonded: Cys498-Cys510, Cys505-Cys519, Cys521-Cys533, Cys539-Cys549, Cys544-Cys558, Cys560-Cys573, Cys579-Cys591, Cys586-Cys600, Cys602-Cys615, Cys621-Cys632, Cys627-Cys641, Cys643-Cys656, Cys662-Cys673, Cys668-Cys682, and Cys684-Cys697. An O-linked (Glc) serine glycan is attached at Ser516. In terms of domain architecture, EGF-like 7; calcium-binding spans Asp535 to Ile574. Ser555 carries O-linked (Glc) serine glycosylation. An EGF-like 8; calcium-binding domain is found at Asp575–Val616. An O-linked (Glc) serine glycan is attached at Ser597. Positions Asp617–Thr657 constitute an EGF-like 9; calcium-binding domain. O-linked (Glc) serine glycosylation occurs at Ser638. In terms of domain architecture, EGF-like 10; calcium-binding spans Asp658–Val698. O-linked (Glc) serine glycosylation is present at Ser679. The TB 3 domain maps to Ser704 to Cys756. The region spanning Asp768–Ile809 is the EGF-like 11; calcium-binding domain. 9 disulfides stabilise this stretch: Cys772-Cys784, Cys779-Cys793, Cys795-Cys808, Cys814-Cys826, Cys821-Cys835, Cys837-Cys850, Cys856-Cys866, Cys861-Cys875, and Cys877-Cys890. The EGF-like 12; calcium-binding domain maps to Asp810 to Glu851. O-linked (Glc) serine glycosylation is present at Ser832. Residues Asp852–Ile891 enclose the EGF-like 13; calcium-binding domain. Ser872 is a glycosylation site (O-linked (Glc) serine). One can recognise a TB 4 domain in the interval Gly896 to Arg947. The 42-residue stretch at Asp955–Leu996 folds into the EGF-like 14; calcium-binding domain. Cystine bridges form between Cys959–Cys971, Cys966–Cys980, and Cys982–Cys995. O-linked (Glc) serine glycosylation is present at Ser977. The TB 5 domain occupies Glu1001–Cys1052. The region spanning Asp1073–Thr1114 is the EGF-like 15; calcium-binding domain. Disulfide bonds link Cys1077-Cys1089, Cys1084-Cys1098, Cys1100-Cys1113, Cys1119-Cys1131, Cys1126-Cys1140, Cys1142-Cys1156, Cys1162-Cys1174, Cys1169-Cys1183, Cys1185-Cys1198, Cys1204-Cys1216, Cys1211-Cys1225, Cys1227-Cys1240, Cys1246-Cys1257, Cys1253-Cys1266, Cys1268-Cys1281, Cys1287-Cys1299, Cys1294-Cys1308, Cys1310-Cys1323, Cys1329-Cys1341, Cys1336-Cys1350, Cys1352-Cys1365, Cys1371-Cys1384, Cys1378-Cys1393, Cys1395-Cys1406, Cys1412-Cys1425, Cys1419-Cys1434, Cys1436-Cys1447, Cys1453-Cys1465, Cys1460-Cys1474, Cys1476-Cys1489, Cys1495-Cys1506, Cys1501-Cys1515, Cys1517-Cys1530, Cys1536-Cys1547, Cys1542-Cys1556, and Cys1558-Cys1571. Ser1095 is a glycosylation site (O-linked (Glc) serine). The N-linked (GlcNAc...) asparagine glycan is linked to Asn1112. One can recognise an EGF-like 16; calcium-binding domain in the interval Asp1115–Met1157. The region spanning Asp1158 to Val1199 is the EGF-like 17; calcium-binding domain. O-linked (Glc) serine glycosylation is present at Ser1180. The region spanning Asp1200–Thr1241 is the EGF-like 18; calcium-binding domain. O-linked (Glc) threonine glycosylation is present at Thr1222. The EGF-like 19; calcium-binding domain maps to Asp1242–Ala1282. The O-linked (Glc) serine glycan is linked to Ser1263. Residues Asp1283–Ile1324 form the EGF-like 20; calcium-binding domain. Positions Asp1325–Thr1366 constitute an EGF-like 21; calcium-binding domain. Ser1347 carries an O-linked (Glc) serine glycan. In terms of domain architecture, EGF-like 22; calcium-binding spans Asp1367–Ile1407. O-linked (Glc) serine glycosylation is present at Ser1390. One can recognise an EGF-like 23; calcium-binding domain in the interval Asp1408–Ser1448. Asn1414 is a glycosylation site (N-linked (GlcNAc...) asparagine). Residues Asp1449–Gln1490 form the EGF-like 24; calcium-binding domain. Positions Asp1491–Thr1531 constitute an EGF-like 25; calcium-binding domain. An N-linked (GlcNAc...) asparagine glycan is attached at Asn1529. The 41-residue stretch at Asp1532–Val1572 folds into the EGF-like 26; calcium-binding domain. A TB 6 domain is found at Gly1577–Cys1633. Residue Asn1625 is glycosylated (N-linked (GlcNAc...) asparagine). In terms of domain architecture, EGF-like 27; calcium-binding spans Asp1650–Glu1691. 6 cysteine pairs are disulfide-bonded: Cys1654/Cys1666, Cys1661/Cys1675, Cys1677/Cys1690, Cys1696/Cys1708, Cys1703/Cys1717, and Cys1719/Cys1732. Residue Ser1672 is glycosylated (O-linked (Glc) serine). The EGF-like 28; calcium-binding domain maps to Asp1692–Met1733. Asn1714 is a glycosylation site (N-linked (GlcNAc...) asparagine). The interaction with MFAP4 stretch occupies residues Met1735–Asp2171. A TB 7 domain is found at Ser1738–Cys1791. 2 N-linked (GlcNAc...) asparagine glycosylation sites follow: Asn1745 and Asn1756. The EGF-like 29; calcium-binding domain maps to Asp1808–Glu1849. Cystine bridges form between Cys1812-Cys1824, Cys1819-Cys1833, Cys1835-Cys1848, Cys1854-Cys1867, Cys1861-Cys1876, Cys1878-Cys1890, Cys1896-Cys1908, Cys1903-Cys1917, Cys1919-Cys1932, Cys1938-Cys1948, Cys1943-Cys1957, Cys1959-Cys1971, Cys1977-Cys1990, Cys1985-Cys1999, Cys2001-Cys2014, Cys2020-Cys2032, Cys2027-Cys2041, Cys2043-Cys2054, Cys2060-Cys2072, Cys2067-Cys2081, and Cys2083-Cys2096. Positions Asp1850–Val1891 constitute an EGF-like 30; calcium-binding domain. Ser1873 carries O-linked (Glc) serine glycosylation. The EGF-like 31; calcium-binding domain maps to Asp1892–Met1933. Residues Asp1934–Leu1972 enclose the EGF-like 32; calcium-binding domain. Asn1945 carries an N-linked (GlcNAc...) asparagine glycan. Ser1954 is a glycosylation site (O-linked (Glc) serine). The EGF-like 33; calcium-binding domain maps to Asp1973–Ile2015. O-linked (Glc) serine glycosylation occurs at Ser1996. An EGF-like 34; calcium-binding domain is found at Asp2016–Ile2055. The region spanning Asp2056–Phe2097 is the EGF-like 35; calcium-binding domain. Positions Ser2102–Cys2155 constitute a TB 8 domain. The N-linked (GlcNAc...) asparagine glycan is linked to Asn2120. Residues Asp2171–Val2212 enclose the EGF-like 36; calcium-binding domain. Disulfide bonds link Cys2175-Cys2187, Cys2182-Cys2196, Cys2198-Cys2211, Cys2217-Cys2228, Cys2223-Cys2237, Cys2239-Cys2251, Cys2257-Cys2268, Cys2264-Cys2277, Cys2279-Cys2292, Cys2298-Cys2312, Cys2305-Cys2321, Cys2323-Cys2336, Cys2342-Cys2354, Cys2349-Cys2363, and Cys2365-Cys2378. A glycan (O-linked (Glc) serine) is linked at Ser2193. The 40-residue stretch at Asp2213–Glu2252 folds into the EGF-like 37; calcium-binding domain. N-linked (GlcNAc...) asparagine glycosylation is present at Asn2225. The 41-residue stretch at Asp2253–Lys2293 folds into the EGF-like 38; calcium-binding domain. Ser2274 carries an O-linked (Glc) serine glycan. The EGF-like 39; calcium-binding domain maps to Asp2294 to Val2337. One can recognise an EGF-like 40; calcium-binding domain in the interval Asp2338–Leu2379. A glycan (O-linked (Glc) serine) is linked at Ser2360. In terms of domain architecture, TB 9 spans Gly2384–Cys2437. Residues Asp2449–Ile2490 enclose the EGF-like 41; calcium-binding domain. Disulfide bonds link Cys2453/Cys2465, Cys2460/Cys2474, Cys2476/Cys2489, Cys2495/Cys2506, Cys2502/Cys2515, Cys2517/Cys2530, Cys2536/Cys2547, Cys2543/Cys2556, Cys2558/Cys2569, Cys2575/Cys2588, Cys2582/Cys2597, Cys2599/Cys2612, Cys2618/Cys2628, Cys2624/Cys2637, Cys2639/Cys2652, Cys2658/Cys2669, Cys2664/Cys2678, Cys2680/Cys2693, Cys2699/Cys2710, Cys2706/Cys2719, and Cys2721/Cys2733. Residue Ser2471 is glycosylated (O-linked (Glc) serine). Positions Asp2491–Lys2531 constitute an EGF-like 42; calcium-binding domain. A glycan (O-linked (Glc) serine) is linked at Ser2512. In terms of domain architecture, EGF-like 43; calcium-binding spans Asp2532–Ile2570. The 43-residue stretch at Asp2571 to Glu2613 folds into the EGF-like 44; calcium-binding domain. The O-linked (Glc) serine glycan is linked to Ser2594. An EGF-like 45; calcium-binding domain is found at Asp2614–Val2653. The region spanning Asp2654–His2694 is the EGF-like 46; calcium-binding domain. A glycan (O-linked (Glc) serine) is linked at Ser2675. The 40-residue stretch at Asp2695–Val2734 folds into the EGF-like 47; calcium-binding domain. Asn2808 carries an N-linked (GlcNAc...) asparagine glycan.

It belongs to the fibrillin family. In terms of assembly, interacts with BMP2, BMP4, BMP7, BMP10 and GDF5. Interacts with MFAP2 and MFAP5. Interacts with ADAMTSL5. Interacts with MFAP4. N-glycosylated. Post-translationally, O-glycosylated on serine residues by POGLUT2 and POGLUT3. As to expression, almost exclusively expressed in placenta. Expressed at much lower level in other tissues. Expressed in fetal eye (18 weeks)in the retinal pigment epithelium (RPE), the choroid, Bruch's membrane and in the sclera. Not expressed in the neural retina. In terms of tissue distribution, present at high level in cytotrophoblasts as compared with syncytiotrophoblasts at 8-9 weeks of pregnancy (at protein level). Levels in the serum increase during pregnancy (at protein level).

The protein resides in the secreted. The protein localises to the extracellular space. It is found in the extracellular matrix. In terms of biological role, fibrillins are structural components of 10-12 nm extracellular calcium-binding microfibrils, which occur either in association with elastin or in elastin-free bundles. Fibrillin-2-containing microfibrils regulate the early process of elastic fiber assembly. Regulates osteoblast maturation by controlling TGF-beta bioavailability and calibrating TGF-beta and BMP levels, respectively. Its function is as follows. Hormone secreted by trophoblasts that promotes trophoblast invasiveness. Has glucogenic activity: is able to increase plasma glucose levels. The chain is Fibrillin-2 from Homo sapiens (Human).